The sequence spans 296 residues: Calponin-2 (296 aa).

Serine 2 bears the N-acetylserine mark. N6-acetyllysine occurs at positions 8 and 25. Positions 28–132 (PQKEAELRSW…SLLALAGKAK (105 aa)) constitute a Calponin-homology (CH) domain. The residue at position 138 (serine 138) is a Phosphoserine. Calponin-like repeat units follow at residues 166–191 (IGLQ…RHLY), 206–231 (ISLQ…RHIY), and 245–269 (MSLQ…RQIY). Residues 275–296 (PQGPAADGAPAAAGDCPGPGES) form a disordered region.

This sequence belongs to the calponin family. In terms of tissue distribution, smooth muscle, and tissues containing significant amounts of smooth muscle.

Its function is as follows. Thin filament-associated protein that is implicated in the regulation and modulation of smooth muscle contraction. It is capable of binding to actin, calmodulin and tropomyosin. The interaction of calponin with actin inhibits the actomyosin Mg-ATPase activity. In Sus scrofa (Pig), this protein is Calponin-2 (CNN2).